We begin with the raw amino-acid sequence, 376 residues long: Flagellin B (376 aa).

Positions 103–130 (SNSSSERQAIQEEVSALNDELNRIAETT) form a coiled coil.

It belongs to the bacterial flagellin family. As to quaternary structure, heteromer of multiple flagellin subunits including FlaA, FlaB, FlaC, FlaD and possibly FlaE.

The protein resides in the secreted. Its subcellular location is the bacterial flagellum. Flagellin is the subunit protein which polymerizes to form the filaments of bacterial flagella. FlaB is not essential for flagellar synthesis and motility. The chain is Flagellin B (flaB) from Vibrio anguillarum (Listonella anguillarum).